We begin with the raw amino-acid sequence, 123 residues long: Small ribosomal subunit protein uS13 (123 aa).

A disordered region spans residues 96–123 (GLPVRGQRTKTNARTRKGPKKTVAGKKK).

It belongs to the universal ribosomal protein uS13 family. In terms of assembly, part of the 30S ribosomal subunit. Forms a loose heterodimer with protein S19. Forms two bridges to the 50S subunit in the 70S ribosome.

In terms of biological role, located at the top of the head of the 30S subunit, it contacts several helices of the 16S rRNA. In the 70S ribosome it contacts the 23S rRNA (bridge B1a) and protein L5 of the 50S subunit (bridge B1b), connecting the 2 subunits; these bridges are implicated in subunit movement. Contacts the tRNAs in the A and P-sites. This is Small ribosomal subunit protein uS13 from Nocardia farcinica (strain IFM 10152).